A 225-amino-acid polypeptide reads, in one-letter code: Uracil-DNA glycosylase (225 aa).

D65 (proton acceptor) is an active-site residue.

Belongs to the uracil-DNA glycosylase (UDG) superfamily. UNG family.

It is found in the cytoplasm. It carries out the reaction Hydrolyzes single-stranded DNA or mismatched double-stranded DNA and polynucleotides, releasing free uracil.. Functionally, excises uracil residues from the DNA which can arise as a result of misincorporation of dUMP residues by DNA polymerase or due to deamination of cytosine. The sequence is that of Uracil-DNA glycosylase from Clostridium perfringens (strain SM101 / Type A).